Reading from the N-terminus, the 118-residue chain is MLVIFLGILGLLASQVSSQLVGQLRPTEDPPEEELEYWCAYMESCQFCWDCQDGTCINKIDGSVIYKNEYVKSCLVSRWLDKCMYDLDKGIYHTMNCSQPWSWNPYKYFRKEWKKDEL.

Residues 1 to 18 (MLVIFLGILGLLASQVSS) form the signal peptide. An N-linked (GlcNAc...) asparagine; by host glycan is attached at N96. The Prevents secretion from ER motif lies at 115 to 118 (KDEL).

Belongs to the asfivirus MGF 110 family. Post-translationally, N-glycosylated.

The protein resides in the host endoplasmic reticulum lumen. Functionally, plays a role in virus cell tropism, and may be required for efficient virus replication in macrophages. This African swine fever virus (isolate Tick/South Africa/Pretoriuskop Pr4/1996) (ASFV) protein is Protein MGF 110-6L.